The sequence spans 478 residues: Cytochrome c-552 (478 aa).

An N-terminal signal peptide occupies residues 1-26; sequence MTRIKINARRIFSLLIPFFFFTSVHA. H94 contributes to the heme c binding site. Positions 122, 125, and 126 each coordinate heme. The heme c site is built by C160, C163, H164, C209, C212, and H213. Residues E215, Y216, K261, and Q263 each coordinate Ca(2+). Y216 lines the substrate pocket. H264 provides a ligand contact to substrate. Heme c is bound by residues H275, C282, C285, H286, H301, C314, C317, H318, and H393.

It belongs to the cytochrome c-552 family. Requires Ca(2+) as cofactor. The cofactor is heme c.

Its subcellular location is the periplasm. It catalyses the reaction 6 Fe(III)-[cytochrome c] + NH4(+) + 2 H2O = 6 Fe(II)-[cytochrome c] + nitrite + 8 H(+). It participates in nitrogen metabolism; nitrate reduction (assimilation). Its function is as follows. Catalyzes the reduction of nitrite to ammonia, consuming six electrons in the process. The protein is Cytochrome c-552 of Escherichia coli O6:H1 (strain CFT073 / ATCC 700928 / UPEC).